The chain runs to 143 residues: Nucleoside diphosphate kinase (143 aa).

Lys-11, Phe-59, Arg-87, Thr-93, Arg-104, and Asn-114 together coordinate ATP. Residue His-117 is the Pros-phosphohistidine intermediate of the active site.

Belongs to the NDK family. As to quaternary structure, homotetramer. The cofactor is Mg(2+).

Its subcellular location is the cytoplasm. It catalyses the reaction a 2'-deoxyribonucleoside 5'-diphosphate + ATP = a 2'-deoxyribonucleoside 5'-triphosphate + ADP. The catalysed reaction is a ribonucleoside 5'-diphosphate + ATP = a ribonucleoside 5'-triphosphate + ADP. In terms of biological role, major role in the synthesis of nucleoside triphosphates other than ATP. The ATP gamma phosphate is transferred to the NDP beta phosphate via a ping-pong mechanism, using a phosphorylated active-site intermediate. This chain is Nucleoside diphosphate kinase, found in Salmonella arizonae (strain ATCC BAA-731 / CDC346-86 / RSK2980).